The primary structure comprises 259 residues: 4-hydroxy-tetrahydrodipicolinate reductase (259 aa).

Residues 9–14 and Glu35 contribute to the NAD(+) site; that span reads GAGGRM. Arg36 lines the NADP(+) pocket. NAD(+) contacts are provided by residues 92–94 and 116–119; these read GTT and APNM. The active-site Proton donor/acceptor is His149. Residue His150 coordinates (S)-2,3,4,5-tetrahydrodipicolinate. Catalysis depends on Lys153, which acts as the Proton donor. 159–160 is a binding site for (S)-2,3,4,5-tetrahydrodipicolinate; the sequence is GT.

It belongs to the DapB family.

Its subcellular location is the cytoplasm. It carries out the reaction (S)-2,3,4,5-tetrahydrodipicolinate + NAD(+) + H2O = (2S,4S)-4-hydroxy-2,3,4,5-tetrahydrodipicolinate + NADH + H(+). The enzyme catalyses (S)-2,3,4,5-tetrahydrodipicolinate + NADP(+) + H2O = (2S,4S)-4-hydroxy-2,3,4,5-tetrahydrodipicolinate + NADPH + H(+). It functions in the pathway amino-acid biosynthesis; L-lysine biosynthesis via DAP pathway; (S)-tetrahydrodipicolinate from L-aspartate: step 4/4. Catalyzes the conversion of 4-hydroxy-tetrahydrodipicolinate (HTPA) to tetrahydrodipicolinate. This chain is 4-hydroxy-tetrahydrodipicolinate reductase, found in Oleidesulfovibrio alaskensis (strain ATCC BAA-1058 / DSM 17464 / G20) (Desulfovibrio alaskensis).